A 507-amino-acid polypeptide reads, in one-letter code: Histidine ammonia-lyase (507 aa).

The 5-imidazolinone (Ala-Gly) cross-link spans 141–143 (ASG). Position 142 is a 2,3-didehydroalanine (Ser) (Ser-142).

This sequence belongs to the PAL/histidase family. Contains an active site 4-methylidene-imidazol-5-one (MIO), which is formed autocatalytically by cyclization and dehydration of residues Ala-Ser-Gly.

The protein localises to the cytoplasm. The enzyme catalyses L-histidine = trans-urocanate + NH4(+). The protein operates within amino-acid degradation; L-histidine degradation into L-glutamate; N-formimidoyl-L-glutamate from L-histidine: step 1/3. The protein is Histidine ammonia-lyase of Burkholderia mallei (strain NCTC 10247).